A 139-amino-acid polypeptide reads, in one-letter code: D-ribose pyranase (139 aa).

The active-site Proton donor is the histidine 20. Substrate contacts are provided by residues aspartate 28, histidine 106, and 128–130 (YAN).

This sequence belongs to the RbsD / FucU family. RbsD subfamily. As to quaternary structure, homodecamer.

The protein resides in the cytoplasm. The catalysed reaction is beta-D-ribopyranose = beta-D-ribofuranose. It participates in carbohydrate metabolism; D-ribose degradation; D-ribose 5-phosphate from beta-D-ribopyranose: step 1/2. Its function is as follows. Catalyzes the interconversion of beta-pyran and beta-furan forms of D-ribose. The chain is D-ribose pyranase from Shewanella pealeana (strain ATCC 700345 / ANG-SQ1).